Reading from the N-terminus, the 133-residue chain is Small ribosomal subunit protein uS19 (133 aa).

It belongs to the universal ribosomal protein uS19 family.

Functionally, protein S19 forms a complex with S13 that binds strongly to the 16S ribosomal RNA. The polypeptide is Small ribosomal subunit protein uS19 (Thermococcus onnurineus (strain NA1)).